A 78-amino-acid polypeptide reads, in one-letter code: Acyl carrier protein (78 aa).

The Carrier domain maps to 2–77 (SDTVERVKKI…DAVKFIDKAS (76 aa)). O-(pantetheine 4'-phosphoryl)serine is present on S37.

The protein belongs to the acyl carrier protein (ACP) family. 4'-phosphopantetheine is transferred from CoA to a specific serine of apo-ACP by AcpS. This modification is essential for activity because fatty acids are bound in thioester linkage to the sulfhydryl of the prosthetic group.

The protein resides in the cytoplasm. The protein operates within lipid metabolism; fatty acid biosynthesis. Its function is as follows. Carrier of the growing fatty acid chain in fatty acid biosynthesis. The chain is Acyl carrier protein from Bartonella quintana (strain Toulouse) (Rochalimaea quintana).